A 258-amino-acid chain; its full sequence is Small ribosomal subunit protein uS2 (258 aa).

Residues 222-258 (GKALRDQDEAEQVEPVSQEEKDEVVAEAMSEADFEEQ) form a disordered region.

Belongs to the universal ribosomal protein uS2 family.

The chain is Small ribosomal subunit protein uS2 from Campylobacter fetus subsp. fetus (strain 82-40).